Here is a 194-residue protein sequence, read N- to C-terminus: Putative manganese efflux pump MntP (194 aa).

6 helical membrane-spanning segments follow: residues 2-22 (ISII…AFAV), 43-63 (LWFG…ASTF), 67-87 (VTQF…GNMV), 111-131 (PLAV…AFMF), 137-157 (AFAI…GLHI), and 174-194 (GVVL…VIAF).

It belongs to the MntP (TC 9.B.29) family.

Its subcellular location is the cell membrane. Functionally, probably functions as a manganese efflux pump. The protein is Putative manganese efflux pump MntP of Bifidobacterium longum (strain DJO10A).